The primary structure comprises 438 residues: 3-phosphoshikimate 1-carboxyvinyltransferase (438 aa).

3-phosphoshikimate contacts are provided by Lys-21, Ser-22, and Arg-26. Lys-21 is a phosphoenolpyruvate binding site. Phosphoenolpyruvate is bound by residues Gly-95 and Arg-123. 3-phosphoshikimate is bound by residues Ser-167, Gln-169, Asp-315, and Lys-342. A phosphoenolpyruvate-binding site is contributed by Gln-169. Asp-315 acts as the Proton acceptor in catalysis. Positions 346 and 387 each coordinate phosphoenolpyruvate.

This sequence belongs to the EPSP synthase family. In terms of assembly, monomer.

Its subcellular location is the cytoplasm. It catalyses the reaction 3-phosphoshikimate + phosphoenolpyruvate = 5-O-(1-carboxyvinyl)-3-phosphoshikimate + phosphate. The protein operates within metabolic intermediate biosynthesis; chorismate biosynthesis; chorismate from D-erythrose 4-phosphate and phosphoenolpyruvate: step 6/7. Its function is as follows. Catalyzes the transfer of the enolpyruvyl moiety of phosphoenolpyruvate (PEP) to the 5-hydroxyl of shikimate-3-phosphate (S3P) to produce enolpyruvyl shikimate-3-phosphate and inorganic phosphate. The protein is 3-phosphoshikimate 1-carboxyvinyltransferase of Coxiella burnetii (strain RSA 331 / Henzerling II).